Reading from the N-terminus, the 1257-residue chain is Putative structural protein ORF146 (1257 aa).

It belongs to the ascovirus HvAV ORF146 family.

It localises to the virion. The sequence is that of Putative structural protein ORF146 from Noctuidae (owlet moths).